A 267-amino-acid chain; its full sequence is Apolipoprotein A-I (267 aa).

An N-terminal signal peptide occupies residues 1–18 (MKATVLTLAVLFLTGSQA). Repeat copies occupy residues 68 to 89 (LKLLDNWDSVTSTVSKLREQLG) and 90 to 111 (PVTQEFWDNLEKETEGLRQEMS). The 10 X approximate tandem repeats stretch occupies residues 68–267 (LKLLDNWDSV…EEYTKKLSTQ (200 aa)). M110 carries the methionine sulfoxide modification. One copy of the 3; half-length repeat lies at 112 to 122 (KDLEEVKAKVQ). 5 consecutive repeat copies span residues 123–144 (PYLDDFQKKWQEEMELYRQKVE), 145–166 (PLRAELHEGTRQKLHELHEKLS), 167–188 (PLGEEVRDRARAHVDALRTHLA), 189–210 (PYSDELRQRLAARLEALKENGG), and 211–232 (ARLAEYHAKASEHLSTLSEKAK). At M136 the chain carries Methionine sulfoxide. The stretch at 233–243 (PALEDLRQGLL) is one 9; half-length repeat. Residues 244 to 267 (PVLESFKVSFLSALEEYTKKLSTQ) form repeat 10.

It belongs to the apolipoprotein A1/A4/E family. As to quaternary structure, homodimer. Interacts with APOA1BP and CLU. Component of a sperm activating protein complex (SPAP), consisting of APOA1, an immunoglobulin heavy chain, an immunoglobulin light chain and albumin. Interacts with NDRG1. Interacts with SCGB3A2. Interacts with NAXE and YJEFN3. Glycosylated. In terms of processing, palmitoylated. Post-translationally, phosphorylation sites are present in the extracellular medium. Major protein of plasma HDL, also found in chylomicrons.

It localises to the secreted. Functionally, participates in the reverse transport of cholesterol from tissues to the liver for excretion by promoting cholesterol efflux from tissues and by acting as a cofactor for the lecithin cholesterol acyltransferase (LCAT). As part of the SPAP complex, activates spermatozoa motility. The chain is Apolipoprotein A-I (APOA1) from Papio hamadryas (Hamadryas baboon).